We begin with the raw amino-acid sequence, 454 residues long: Bifunctional protein GlmU (454 aa).

The interval 1–240 (MNVSVVILAA…EEEFMGVNSK (240 aa)) is pyrophosphorylase. Residues 8-11 (LAAG), Lys-22, and 87-88 (GT) each bind UDP-N-acetyl-alpha-D-glucosamine. Asp-119 serves as a coordination point for Mg(2+). UDP-N-acetyl-alpha-D-glucosamine contacts are provided by Gly-152, Glu-166, Asn-181, and Asn-238. Asn-238 is a binding site for Mg(2+). The segment at 241–261 (IQLACAQEIMLQRLREKAMEQ) is linker. The segment at 262–454 (GVIMNLPHTI…SDKNEEKKEQ (193 aa)) is N-acetyltransferase. Residues Arg-325 and Lys-342 each coordinate UDP-N-acetyl-alpha-D-glucosamine. The active-site Proton acceptor is the His-353. Residues Tyr-356 and Asn-367 each contribute to the UDP-N-acetyl-alpha-D-glucosamine site. Residues Ala-370, 376–377 (NY), Ser-395, Ala-413, and Arg-430 contribute to the acetyl-CoA site.

In the N-terminal section; belongs to the N-acetylglucosamine-1-phosphate uridyltransferase family. This sequence in the C-terminal section; belongs to the transferase hexapeptide repeat family. In terms of assembly, homotrimer. The cofactor is Mg(2+).

The protein localises to the cytoplasm. It catalyses the reaction alpha-D-glucosamine 1-phosphate + acetyl-CoA = N-acetyl-alpha-D-glucosamine 1-phosphate + CoA + H(+). The catalysed reaction is N-acetyl-alpha-D-glucosamine 1-phosphate + UTP + H(+) = UDP-N-acetyl-alpha-D-glucosamine + diphosphate. It functions in the pathway nucleotide-sugar biosynthesis; UDP-N-acetyl-alpha-D-glucosamine biosynthesis; N-acetyl-alpha-D-glucosamine 1-phosphate from alpha-D-glucosamine 6-phosphate (route II): step 2/2. It participates in nucleotide-sugar biosynthesis; UDP-N-acetyl-alpha-D-glucosamine biosynthesis; UDP-N-acetyl-alpha-D-glucosamine from N-acetyl-alpha-D-glucosamine 1-phosphate: step 1/1. Its pathway is bacterial outer membrane biogenesis; LPS lipid A biosynthesis. Functionally, catalyzes the last two sequential reactions in the de novo biosynthetic pathway for UDP-N-acetylglucosamine (UDP-GlcNAc). The C-terminal domain catalyzes the transfer of acetyl group from acetyl coenzyme A to glucosamine-1-phosphate (GlcN-1-P) to produce N-acetylglucosamine-1-phosphate (GlcNAc-1-P), which is converted into UDP-GlcNAc by the transfer of uridine 5-monophosphate (from uridine 5-triphosphate), a reaction catalyzed by the N-terminal domain. This is Bifunctional protein GlmU from Helicobacter hepaticus (strain ATCC 51449 / 3B1).